The sequence spans 361 residues: MRILVAMSGGVDSSVVAALLKRQGHEVIGATLQLYDHGQAAKPGACCAGRDIMDARAVADRLGFPHYVIDAESRFRDSVVESFADAYARGETPVPCVACNQGVKFTDLLGMARDLGCEAMATGHYVRRVEGPEGAEMHRPVDAERDQTWFLFATTKDQLDYLRFPLGEMPDKAHVRALAQELGLEIAAKPDSQDICFVPSGSYAELVEKLRPEVRGEGEIVDEDGRVLGRHEGVARYTVGQSKRLGDIHTATGERQMVTRIDVPKRRIVVGPRVQVSEADSRRSVRLRDMNWLIDAPAEGVRCGVQIRAREKLREALVKPLENGGALVELTEAAMPAPGQACVLYDGSRVLGGGFITAGDA.

ATP contacts are provided by residues 6-13 (AMSGGVDS) and Leu32. Cys99 acts as the Nucleophile in catalysis. A disulfide bridge links Cys99 with Cys196. Residue Gly123 participates in ATP binding. Residues 145-147 (RDQ) form an interaction with tRNA region. The active-site Cysteine persulfide intermediate is the Cys196.

This sequence belongs to the MnmA/TRMU family.

It is found in the cytoplasm. It carries out the reaction S-sulfanyl-L-cysteinyl-[protein] + uridine(34) in tRNA + AH2 + ATP = 2-thiouridine(34) in tRNA + L-cysteinyl-[protein] + A + AMP + diphosphate + H(+). Functionally, catalyzes the 2-thiolation of uridine at the wobble position (U34) of tRNA, leading to the formation of s(2)U34. This Gluconobacter oxydans (strain 621H) (Gluconobacter suboxydans) protein is tRNA-specific 2-thiouridylase MnmA.